A 434-amino-acid polypeptide reads, in one-letter code: V-type ATP synthase beta chain (434 aa).

This sequence belongs to the ATPase alpha/beta chains family.

Its function is as follows. Produces ATP from ADP in the presence of a proton gradient across the membrane. The V-type beta chain is a regulatory subunit. The chain is V-type ATP synthase beta chain from Borreliella afzelii (strain PKo) (Borrelia afzelii).